The chain runs to 585 residues: Protein FAM151A (585 aa).

Residues 14 to 34 (WVFAGITCVSVVVIAAIVLAI) traverse the membrane as a helical segment.

It belongs to the menorin family.

The protein localises to the membrane. The protein is Protein FAM151A (FAM151A) of Homo sapiens (Human).